The sequence spans 71 residues: Putative antitoxin VapB15 (71 aa).

It belongs to the UPF0330 family.

Its function is as follows. Possibly the antitoxin component of a type II toxin-antitoxin (TA) system. Its cognate toxin is VapC15 (Potential). The chain is Putative antitoxin VapB15 (vapB15) from Archaeoglobus fulgidus (strain ATCC 49558 / DSM 4304 / JCM 9628 / NBRC 100126 / VC-16).